The primary structure comprises 139 residues: Maximins 4/H3 type 5 (139 aa).

The signal sequence occupies residues 1–18 (MNFKYIFAVSFLIASAYA). A propeptide spanning residues 19–43 (RSVQNDEQSLSQRDVLEEESLREIR) is cleaved from the precursor. At asparagine 70 the chain carries Asparagine amide. Positions 74-118 (TAEEHEVMKRLEAVMRDLDSLDHPEEASERETRGFNQDEIAKEKR) are excised as a propeptide. Isoleucine 138 is modified (isoleucine amide).

This sequence belongs to the bombinin family. Expressed by the skin glands.

It is found in the secreted. Maximin-4 shows antibacterial activity against both Gram-positive and Gram-negative bacteria. It also shows antimicrobial activity against the fungus C.albicans, but not against A.flavus nor P.uticale. It has little hemolytic activity. It does not possess a significant cytotoxicity against tumor cell lines. It does not possess a significant anti-HIV activity. In terms of biological role, maximin-H3 shows antibacterial activity against both Gram-positive and Gram-negative bacteria. It also shows antimicrobial activity against the fungus C.albicans. Shows strong hemolytic activity. This is Maximins 4/H3 type 5 from Bombina maxima (Giant fire-bellied toad).